We begin with the raw amino-acid sequence, 121 residues long: Prismalin-14 (121 aa).

Residues 1–16 (MRSLLVLLALAACASA) form the signal peptide. A Pyrrolidone carboxylic acid modification is found at Gln17. 4 repeat units span residues 48 to 51 (PIYR), 52 to 55 (PIYR), 56 to 59 (PIYY), and 60 to 63 (PQII). The segment at 48 to 63 (PIYRPIYRPIYYPQII) is 4 X 4 AA approximate tandem repeats of P-I-Y-R.

As to expression, expressed only at the mantle edge where it is found predominantly in the inner side of the outer mantle fold.

Its function is as follows. Displays inhibitory activity against calcium carbonate precipitation, binds calcium and affects crystallization of calcium carbonate in vitro. May be involved in calcification of the prismatic layer of the shell. The sequence is that of Prismalin-14 from Pinctada fucata (Akoya pearl oyster).